Reading from the N-terminus, the 292-residue chain is 33 kDa chaperonin (292 aa).

Disulfide bonds link Cys237–Cys239 and Cys270–Cys273.

Belongs to the HSP33 family. In terms of processing, under oxidizing conditions two disulfide bonds are formed involving the reactive cysteines. Under reducing conditions zinc is bound to the reactive cysteines and the protein is inactive.

The protein localises to the cytoplasm. Its function is as follows. Redox regulated molecular chaperone. Protects both thermally unfolding and oxidatively damaged proteins from irreversible aggregation. Plays an important role in the bacterial defense system toward oxidative stress. The chain is 33 kDa chaperonin from Lachnoclostridium phytofermentans (strain ATCC 700394 / DSM 18823 / ISDg) (Clostridium phytofermentans).